Consider the following 165-residue polypeptide: MALNLSKKKTIVSKINQISNLALSAIIANSQGISVNKINELRKSGREIGVKMSIVRNTLLSLAIENTAFKCLKKKLKGSTFIAYSTKHPGSGARLFKEFEKKNKKFKITGAVFEGKLLSELEINQLADMPTYEEAIRKLLLTLKISIAGKLIYTLSAIKEKKETS.

It belongs to the universal ribosomal protein uL10 family. In terms of assembly, part of the ribosomal stalk of the 50S ribosomal subunit. The N-terminus interacts with L11 and the large rRNA to form the base of the stalk. The C-terminus forms an elongated spine to which L12 dimers bind in a sequential fashion forming a multimeric L10(L12)X complex.

Functionally, forms part of the ribosomal stalk, playing a central role in the interaction of the ribosome with GTP-bound translation factors. This is Large ribosomal subunit protein uL10 from Buchnera aphidicola subsp. Schizaphis graminum (strain Sg).